The following is a 901-amino-acid chain: HTH-type transcriptional regulator MalT (901 aa).

39–46 (SPAGYGKT) contributes to the ATP binding site. An HTH luxR-type domain is found at 829-894 (ELIRTSPLTQ…AAVQHAQKLL (66 aa)). The segment at residues 853 to 872 (NEQIAGELEVAATTIKTHIR) is a DNA-binding region (H-T-H motif).

Belongs to the MalT family. Monomer in solution. Oligomerizes to an active state in the presence of the positive effectors ATP and maltotriose.

Its activity is regulated as follows. Activated by ATP and maltotriose, which are both required for DNA binding. In terms of biological role, positively regulates the transcription of the maltose regulon whose gene products are responsible for uptake and catabolism of malto-oligosaccharides. Specifically binds to the promoter region of its target genes, recognizing a short DNA motif called the MalT box. This chain is HTH-type transcriptional regulator MalT, found in Escherichia coli O45:K1 (strain S88 / ExPEC).